A 58-amino-acid chain; its full sequence is Large ribosomal subunit protein bL32 (58 aa).

The segment at methionine 1–threonine 23 is disordered. Basic residues predominate over residues serine 9–tyrosine 20.

This sequence belongs to the bacterial ribosomal protein bL32 family.

In Lactococcus lactis subsp. cremoris (Streptococcus cremoris), this protein is Large ribosomal subunit protein bL32 (rpmF).